The primary structure comprises 313 residues: Phosphate import ATP-binding protein PstB 2 (313 aa).

Positions 1 to 33 are enriched in polar residues; that stretch reads MSDSINTEPSTDTQTNGERTVETTSPSAETTAG. Residues 1–40 are disordered; sequence MSDSINTEPSTDTQTNGERTVETTSPSAETTAGESEEQVR. The region spanning 54–308 is the ABC transporter domain; sequence LSVENLDVWY…PESQRVEDYI (255 aa). 86–93 lines the ATP pocket; sequence GPSGCGKS.

Belongs to the ABC transporter superfamily. Phosphate importer (TC 3.A.1.7) family. In terms of assembly, the complex is composed of two ATP-binding proteins (PstB), two transmembrane proteins (PstC and PstA) and a solute-binding protein (PstS).

The protein localises to the cell membrane. The enzyme catalyses phosphate(out) + ATP + H2O = ADP + 2 phosphate(in) + H(+). In terms of biological role, part of the ABC transporter complex PstSACB involved in phosphate import. Responsible for energy coupling to the transport system. The polypeptide is Phosphate import ATP-binding protein PstB 2 (Haloarcula marismortui (strain ATCC 43049 / DSM 3752 / JCM 8966 / VKM B-1809) (Halobacterium marismortui)).